Here is a 503-residue protein sequence, read N- to C-terminus: Putative (R)-citramalate synthase CimA (503 aa).

Positions 9 to 257 (IRFFDTTLRD…DTGIATEELY (249 aa)) constitute a Pyruvate carboxyltransferase domain.

It belongs to the alpha-IPM synthase/homocitrate synthase family. In terms of assembly, homodimer.

The catalysed reaction is pyruvate + acetyl-CoA + H2O = (3R)-citramalate + CoA + H(+). The protein operates within amino-acid biosynthesis; L-isoleucine biosynthesis; 2-oxobutanoate from pyruvate: step 1/3. Functionally, catalyzes the condensation of pyruvate and acetyl-coenzyme A to form (R)-citramalate. This Methanoculleus marisnigri (strain ATCC 35101 / DSM 1498 / JR1) protein is Putative (R)-citramalate synthase CimA.